The following is a 57-amino-acid chain: Sec-independent protein translocase protein TatAy (57 aa).

The helical transmembrane segment at 1–21 threads the bilayer; it reads MPIGPGSLAVIAIVALIIFGP.

Belongs to the TatA/E family. In terms of assembly, forms a complex with TatCy. Two types of complexes exist: one composed of TatAy and TatCy, and another composed only of TatAy. Cytosolic TatA forms large complexes or aggregates.

The protein localises to the cell membrane. Its subcellular location is the cytoplasm. It is found in the cytosol. In terms of biological role, part of the twin-arginine translocation (Tat) system that transports large folded proteins containing a characteristic twin-arginine motif in their signal peptide across membranes. TatA could form the protein-conducting channel of the Tat system. Required for YwbN secretion. This Bacillus subtilis (strain 168) protein is Sec-independent protein translocase protein TatAy.